The primary structure comprises 320 residues: Stress-induced-phosphoprotein 1 (320 aa).

TPR repeat units lie at residues 5–38 (AIAEKDLGNAAYKQKDFEKAHVHYDKAIELDPSN), 40–72 (TFYNNKAAVYFEEKKFAECVQFCEKAVEVGRET), 80–113 (AKAMSRAGNAFQKQNDLSLAVQWFHRSLSEFRDP), 140–173 (AQEEKNKGNEYFKKGDYPTAMRHYNEAVKRDPEN), 175–207 (ILYSNRAACLTKLMEFQRALDDCDTCIRLDSKF), and 208–241 (IKGYIRKAACLVAMREWSKAQRAYEDALQVDPSN). The segment at 241–269 (NEEAREGVRNCLRSNDEDPEKAKERSLAD) is disordered. A compositionally biased stretch (basic and acidic residues) spans 242–269 (EEAREGVRNCLRSNDEDPEKAKERSLAD). The STI1 domain occupies 269–308 (DPEVQEILRDPGMRMILEQMSNDPGAVREHLKNPEIFQKL).

Forms a complex with hsp-1/hsp70 and daf-21/hsp90. Interacts with daf-21/hsp90 (via the C-terminal MEEVD pentapeptide). Expressed ubiquitously in the whole body. Detected predominantly in the pharyngeal muscles, vulva epithelial cells, striated body-wall muscles, spermathecae and intestinal cell ring. Also observed in the tail regions of hermaphrodite and in the sensory rays and spicules of males.

The protein localises to the cytoplasm. Its function is as follows. Plays a role in gonad development. Up-regulates longevity and thermotolerance. Binds daf-21/hsp90 and inhibits its ATPase activity. This is Stress-induced-phosphoprotein 1 from Caenorhabditis elegans.